A 1296-amino-acid polypeptide reads, in one-letter code: DNA-directed RNA polymerase subunit beta' (1296 aa).

Residues Cys-60, Cys-62, Cys-75, and Cys-78 each coordinate Zn(2+). Residues 188-209 are disordered; it reads GAKGDARRKVRESAEREMRQIR. Mg(2+) is bound by residues Asp-535, Asp-537, and Asp-539. Positions 877, 954, 961, and 964 each coordinate Zn(2+).

Belongs to the RNA polymerase beta' chain family. As to quaternary structure, the RNAP catalytic core consists of 2 alpha, 1 beta, 1 beta' and 1 omega subunit. When a sigma factor is associated with the core the holoenzyme is formed, which can initiate transcription. Mg(2+) serves as cofactor. Requires Zn(2+) as cofactor.

It carries out the reaction RNA(n) + a ribonucleoside 5'-triphosphate = RNA(n+1) + diphosphate. In terms of biological role, DNA-dependent RNA polymerase catalyzes the transcription of DNA into RNA using the four ribonucleoside triphosphates as substrates. This chain is DNA-directed RNA polymerase subunit beta', found in Parafrankia sp. (strain EAN1pec).